A 798-amino-acid polypeptide reads, in one-letter code: Integrin beta-7 (798 aa).

The signal sequence occupies residues 1 to 19 (MVALPMVLVLLLVLSRGES). The Extracellular segment spans residues 20–723 (ELDAKIPSTG…VRPQEKGADH (704 aa)). Positions 44-92 (SCQPAPSCQKCILSHPSCAWCKQLNFTASGEAEARRCARREELLARGCP) constitute a PSI domain. 7 disulfide bridges follow: cysteine 51–cysteine 476, cysteine 54–cysteine 80, cysteine 64–cysteine 91, cysteine 216–cysteine 223, cysteine 271–cysteine 311, cysteine 412–cysteine 428, and cysteine 448–cysteine 474. An N-linked (GlcNAc...) asparagine glycan is attached at asparagine 68. The segment at 98–124 (EPRGQQEVLQDQPLSQGARGEGATQLA) is disordered. Residues 150 to 389 (YPVDLYYLMD…QLIMDAYNSL (240 aa)) form the VWFA domain. The Mg(2+) site is built by serine 161 and serine 163. 4 residues coordinate Ca(2+): serine 163, aspartate 166, aspartate 167, and aspartate 198. Positions 254, 256, 258, and 259 each coordinate Ca(2+). A Mg(2+)-binding site is contributed by glutamate 259. A glycan (N-linked (GlcNAc...) asparagine) is linked at asparagine 279. Ca(2+)-binding residues include aspartate 289 and glutamate 373. Residue asparagine 434 is glycosylated (N-linked (GlcNAc...) asparagine). Asparagine 477 carries N-linked (GlcNAc...) asparagine glycosylation. 19 disulfides stabilise this stretch: cysteine 478–cysteine 497, cysteine 488–cysteine 500, cysteine 502–cysteine 511, cysteine 513–cysteine 545, cysteine 527–cysteine 543, cysteine 537–cysteine 548, cysteine 550–cysteine 559, cysteine 561–cysteine 582, cysteine 566–cysteine 580, cysteine 574–cysteine 585, cysteine 587–cysteine 596, cysteine 598–cysteine 621, cysteine 605–cysteine 619, cysteine 613–cysteine 624, cysteine 626–cysteine 635, cysteine 638–cysteine 641, cysteine 645–cysteine 688, cysteine 651–cysteine 670, and cysteine 654–cysteine 666. 4 I-EGF domains span residues 478–512 (CSDT…RLCE), 513–560 (CSVA…HLCE), 561–597 (CDDA…RACE), and 598–636 (CSGD…ALCD). Asparagine 531 carries N-linked (GlcNAc...) asparagine glycosylation. An N-linked (GlcNAc...) asparagine glycan is attached at asparagine 590. Asparagine 665 and asparagine 674 each carry an N-linked (GlcNAc...) asparagine glycan. Residues 724-746 (TQAIVLGCVGGIVAVGLGLVLAY) form a helical membrane-spanning segment. Residues 747-798 (RLSVEIYDRREYSRFEKEQQQLNWKQDSNPLYKSAITTTINPRFQEADSPTL) are Cytoplasmic-facing. Tyrosine 778 carries the post-translational modification Phosphotyrosine; by Tyr-kinases.

It belongs to the integrin beta chain family. Heterodimer of an alpha and a beta subunit. ITGB7/beta-7 associates with either ITGA4/alpha-4 or ITGAE/alpha-E. Integrin ITGA4/ITGB7 interacts with MADCAM1. Integrin ITGA4/ITGB7 interacts with VCAM1 and fibronectin. Interacts with FLNA (via filamin repeats 4, 9, 12, 17, 19, 21, and 23). In terms of assembly, (Microbial infection) May interact with HIV-1 gp120. Expressed in a variety of leukocyte lines.

The protein resides in the cell membrane. Functionally, integrin ITGA4/ITGB7 (alpha-4/beta-7) (Peyer patches-specific homing receptor LPAM-1) is an adhesion molecule that mediates lymphocyte migration and homing to gut-associated lymphoid tissue (GALT). Integrin ITGA4/ITGB7 interacts with the cell surface adhesion molecules MADCAM1 which is normally expressed by the vascular endothelium of the gastrointestinal tract. Also interacts with VCAM1 and fibronectin, an extracellular matrix component. It recognizes one or more domains within the alternatively spliced CS-1 region of fibronectin. Interactions involve the tripeptide L-D-T in MADCAM1, and L-D-V in fibronectin. Integrin ITGAE/ITGB7 (alpha-E/beta-7, HML-1) is a receptor for E-cadherin. (Microbial infection) Binds to HIV-1 gp120, thereby allowing the virus to enter GALT, which is thought to be the major trigger of AIDS disease. Interaction would involve a tripeptide L-D-I in HIV-1 gp120. In Homo sapiens (Human), this protein is Integrin beta-7 (ITGB7).